A 393-amino-acid polypeptide reads, in one-letter code: Probable RNA methyltransferase sce3898 (393 aa).

The active-site Proton acceptor is the Glu-82. In terms of domain architecture, Radical SAM core spans 90 to 329; sequence RPGRYSACVS…VRSARLDAFR (240 aa). Cys-97 and Cys-353 are joined by a disulfide. Positions 104, 108, and 111 each coordinate [4Fe-4S] cluster. S-adenosyl-L-methionine is bound by residues 157 to 158, 212 to 214, and Asn-294; these read GE and SLG. Cys-353 functions as the S-methylcysteine intermediate in the catalytic mechanism. The interval 357–393 is disordered; it reads ARPSAEAQRPGGRRAPPRPGATAGAADVGPSAPPRPA. A compositionally biased stretch (low complexity) spans 373-382; sequence PRPGATAGAA.

The protein belongs to the radical SAM superfamily. RlmN family. [4Fe-4S] cluster is required as a cofactor.

The protein resides in the cytoplasm. This Sorangium cellulosum (strain So ce56) (Polyangium cellulosum (strain So ce56)) protein is Probable RNA methyltransferase sce3898.